The sequence spans 219 residues: Octanoyltransferase (219 aa).

The 176-residue stretch at 32–207 folds into the BPL/LPL catalytic domain; that stretch reads ENSQDEIWIV…TLSQELGLDK (176 aa). Residues 71-78, 138-140, and 151-153 contribute to the substrate site; these read RGGQVTYH, SLG, and GLA. The Acyl-thioester intermediate role is filled by Cys169.

The protein belongs to the LipB family.

It is found in the cytoplasm. The enzyme catalyses octanoyl-[ACP] + L-lysyl-[protein] = N(6)-octanoyl-L-lysyl-[protein] + holo-[ACP] + H(+). It functions in the pathway protein modification; protein lipoylation via endogenous pathway; protein N(6)-(lipoyl)lysine from octanoyl-[acyl-carrier-protein]: step 1/2. Functionally, catalyzes the transfer of endogenously produced octanoic acid from octanoyl-acyl-carrier-protein onto the lipoyl domains of lipoate-dependent enzymes. Lipoyl-ACP can also act as a substrate although octanoyl-ACP is likely to be the physiological substrate. This Shewanella pealeana (strain ATCC 700345 / ANG-SQ1) protein is Octanoyltransferase.